The primary structure comprises 498 residues: Probable malate:quinone oxidoreductase 2 (498 aa).

This sequence belongs to the MQO family. FAD is required as a cofactor.

The catalysed reaction is (S)-malate + a quinone = a quinol + oxaloacetate. It participates in carbohydrate metabolism; tricarboxylic acid cycle; oxaloacetate from (S)-malate (quinone route): step 1/1. The sequence is that of Probable malate:quinone oxidoreductase 2 from Staphylococcus epidermidis (strain ATCC 35984 / DSM 28319 / BCRC 17069 / CCUG 31568 / BM 3577 / RP62A).